The sequence spans 375 residues: Methylthioribose-1-phosphate isomerase (375 aa).

Substrate is bound by residues 53 to 55 (RGA), R90, and Q202. Catalysis depends on D243, which acts as the Proton donor. Residue 253–254 (NK) participates in substrate binding.

This sequence belongs to the eIF-2B alpha/beta/delta subunits family. MtnA subfamily.

It carries out the reaction 5-(methylsulfanyl)-alpha-D-ribose 1-phosphate = 5-(methylsulfanyl)-D-ribulose 1-phosphate. Its pathway is amino-acid biosynthesis; L-methionine biosynthesis via salvage pathway; L-methionine from S-methyl-5-thio-alpha-D-ribose 1-phosphate: step 1/6. Catalyzes the interconversion of methylthioribose-1-phosphate (MTR-1-P) into methylthioribulose-1-phosphate (MTRu-1-P). In Rhodospirillum centenum (strain ATCC 51521 / SW), this protein is Methylthioribose-1-phosphate isomerase.